Consider the following 716-residue polypeptide: Probable extracellular serine carboxypeptidase (716 aa).

An N-terminal signal peptide occupies residues 1 to 17; the sequence is MVKLTACLLLLVAAVQA. N-linked (GlcNAc...) asparagine glycosylation is found at Asn143 and Asn174. Ser188 (charge relay system) is an active-site residue. 2 N-linked (GlcNAc...) asparagine glycosylation sites follow: Asn258 and Asn354. Catalysis depends on Asp466, which acts as the Charge relay system. Asn507 and Asn550 each carry an N-linked (GlcNAc...) asparagine glycan. The interval 617-636 is disordered; the sequence is RDLAAQPSKSKKDRRGQQLS. A helical transmembrane segment spans residues 652–672; sequence LGFVSFLVFAFSSFTFIPDIE.

This sequence belongs to the peptidase S28 family.

The protein resides in the membrane. It is found in the secreted. The polypeptide is Probable extracellular serine carboxypeptidase (Arthroderma benhamiae (strain ATCC MYA-4681 / CBS 112371) (Trichophyton mentagrophytes)).